The sequence spans 1293 residues: Enterobactin synthase component F (1293 aa).

The elongation/condensation stretch occupies residues 1-301; the sequence is MSQHLPLVAA…NVLPLGIHIA (301 aa). The interval 482-887 is adenylation; sequence SYREMREQVV…ALPDVEQAVT (406 aa). Positions 971-1046 constitute a Carrier domain; the sequence is APKAGSETII…KLATIIDGEE (76 aa). At serine 1006 the chain carries O-(pantetheine 4'-phosphoryl)serine. A thioesterase region spans residues 1066 to 1293; it reads PTLFCFHPAS…GPIIRATLNR (228 aa). The active-site Proton acceptor; for thioesterase activity is histidine 1271.

Belongs to the ATP-dependent AMP-binding enzyme family. EntF subfamily. In terms of assembly, proteins EntB, EntD, EntE and EntF are the component of the enterobactin synthase. Components probably do not form a stable complex. EntF acts as a catalytic monomer. Requires pantetheine 4'-phosphate as cofactor. In terms of processing, 4'-phosphopantetheine is transferred from CoA to a specific serine of apo-EntF by EntD. Holo-EntF so formed is then acylated with seryl-AMP.

It localises to the cytoplasm. The enzyme catalyses 3 2,3-dihydroxybenzoate + 3 L-serine + 6 ATP = enterobactin + 6 AMP + 6 diphosphate + 4 H(+). The catalysed reaction is holo-[peptidyl-carrier protein] + L-serine + ATP = L-seryl-[peptidyl-carrier protein] + AMP + diphosphate. The protein operates within siderophore biosynthesis; enterobactin biosynthesis. Functionally, involved in the biosynthesis of the siderophore enterobactin (enterochelin), which is a macrocyclic trimeric lactone of N-(2,3-dihydroxybenzoyl)-serine. EntF catalyzes the activation of L-serine via ATP-dependent PPi exchange reaction to form seryladenylate. Activated L-serine is loaded onto the peptidyl carrier domain via a thioester linkage to the phosphopanthetheine moiety, forming seryl-S-Ppant-EntF. EntF acts then as the sole catalyst for the formation of the three amide and three ester linkages found in enterobactin, using seryladenylate and 2,3-dihydroxybenzoate-S-Ppant-EntB (DHB-S-Ppant-EntB) as substrates, via the formation of a DHB-Ser-S-Ppant-EntF intermediate. In Escherichia coli O157:H7, this protein is Enterobactin synthase component F (entF).